Here is a 434-residue protein sequence, read N- to C-terminus: Glutamate-1-semialdehyde 2,1-aminomutase 1 (434 aa).

K270 carries the post-translational modification N6-(pyridoxal phosphate)lysine.

It belongs to the class-III pyridoxal-phosphate-dependent aminotransferase family. HemL subfamily. As to quaternary structure, homodimer. The cofactor is pyridoxal 5'-phosphate.

It localises to the cytoplasm. It catalyses the reaction (S)-4-amino-5-oxopentanoate = 5-aminolevulinate. It functions in the pathway porphyrin-containing compound metabolism; protoporphyrin-IX biosynthesis; 5-aminolevulinate from L-glutamyl-tRNA(Glu): step 2/2. This Bacillus cereus (strain AH187) protein is Glutamate-1-semialdehyde 2,1-aminomutase 1.